We begin with the raw amino-acid sequence, 398 residues long: Dual-specificity RNA methyltransferase RlmN (398 aa).

The active-site Proton acceptor is Glu-121. One can recognise a Radical SAM core domain in the interval 127–370; the sequence is ETDRGTLCVS…VRTPRGRDIL (244 aa). A disulfide bridge connects residues Cys-134 and Cys-373. [4Fe-4S] cluster-binding residues include Cys-141, Cys-145, and Cys-148. S-adenosyl-L-methionine contacts are provided by residues 199–200, Ser-231, 253–255, and Asn-330; these read GE and SLH. Cys-373 (S-methylcysteine intermediate) is an active-site residue.

Belongs to the radical SAM superfamily. RlmN family. [4Fe-4S] cluster serves as cofactor.

It is found in the cytoplasm. The enzyme catalyses adenosine(2503) in 23S rRNA + 2 reduced [2Fe-2S]-[ferredoxin] + 2 S-adenosyl-L-methionine = 2-methyladenosine(2503) in 23S rRNA + 5'-deoxyadenosine + L-methionine + 2 oxidized [2Fe-2S]-[ferredoxin] + S-adenosyl-L-homocysteine. It carries out the reaction adenosine(37) in tRNA + 2 reduced [2Fe-2S]-[ferredoxin] + 2 S-adenosyl-L-methionine = 2-methyladenosine(37) in tRNA + 5'-deoxyadenosine + L-methionine + 2 oxidized [2Fe-2S]-[ferredoxin] + S-adenosyl-L-homocysteine. Functionally, specifically methylates position 2 of adenine 2503 in 23S rRNA and position 2 of adenine 37 in tRNAs. m2A2503 modification seems to play a crucial role in the proofreading step occurring at the peptidyl transferase center and thus would serve to optimize ribosomal fidelity. In Rhodopseudomonas palustris (strain BisB5), this protein is Dual-specificity RNA methyltransferase RlmN.